The chain runs to 396 residues: Phosphoglycerate kinase (396 aa).

Substrate is bound by residues 21–23 (DLN), R36, 59–62 (HFGR), R118, and R151. ATP-binding positions include K201, E323, and 353 to 356 (GGDT).

This sequence belongs to the phosphoglycerate kinase family. Monomer.

The protein resides in the cytoplasm. It catalyses the reaction (2R)-3-phosphoglycerate + ATP = (2R)-3-phospho-glyceroyl phosphate + ADP. It participates in carbohydrate degradation; glycolysis; pyruvate from D-glyceraldehyde 3-phosphate: step 2/5. The polypeptide is Phosphoglycerate kinase (Brucella melitensis biotype 1 (strain ATCC 23456 / CCUG 17765 / NCTC 10094 / 16M)).